We begin with the raw amino-acid sequence, 301 residues long: Recombination-associated protein RdgC (301 aa).

Belongs to the RdgC family.

It is found in the cytoplasm. Its subcellular location is the nucleoid. In terms of biological role, may be involved in recombination. The sequence is that of Recombination-associated protein RdgC from Xanthomonas axonopodis pv. citri (strain 306).